Here is a 650-residue protein sequence, read N- to C-terminus: Putative polypeptide N-acetylgalactosaminyltransferase 9 (650 aa).

Residues 1-11 (MAFIWRRRSTT) lie on the Cytoplasmic side of the membrane. Residues 12–31 (IVKLVAFALAIWFCIAFLVY) traverse the membrane as a helical; Signal-anchor for type II membrane protein segment. Residues 32-650 (TDDTRRRAAQ…TLENYDSSKL (619 aa)) lie on the Lumenal side of the membrane. The disordered stretch occupies residues 84–154 (NVIGGGGQKQ…NPGELGKPVR (71 aa)). A compositionally biased stretch (basic and acidic residues) spans 107–136 (HKADLQAERMRKKAAEQPKKKPQEDSKKVI). 5 disulfide bridges follow: C198–C432, C423–C499, C535–C554, C577–C590, and C616–C631. A catalytic subdomain A region spans residues 208–317 (LPKTDVIICF…EGWLEPLLDR (110 aa)). Residues C216, D249, and R278 each coordinate substrate. Residue D301 coordinates Mn(2+). 2 residues coordinate substrate: S302 and H303. A Mn(2+)-binding site is contributed by H303. N-linked (GlcNAc...) asparagine glycosylation is found at N321 and N373. The interval 378–440 (PVYSPTMAGG…PCSHVGHIFR (63 aa)) is catalytic subdomain B. H437 serves as a coordination point for Mn(2+). Substrate is bound by residues R440 and Y445. In terms of domain architecture, Ricin B-type lectin spans 521–643 (AHGEIRNLGY…SLSRQQWTLE (123 aa)).

The protein belongs to the glycosyltransferase 2 family. GalNAc-T subfamily. Isoform A forms homotetramer. Isoform B forms homodimer. The cofactor is Mn(2+).

It is found in the golgi apparatus membrane. It carries out the reaction L-seryl-[protein] + UDP-N-acetyl-alpha-D-galactosamine = a 3-O-[N-acetyl-alpha-D-galactosaminyl]-L-seryl-[protein] + UDP + H(+). It catalyses the reaction L-threonyl-[protein] + UDP-N-acetyl-alpha-D-galactosamine = a 3-O-[N-acetyl-alpha-D-galactosaminyl]-L-threonyl-[protein] + UDP + H(+). It functions in the pathway protein modification; protein glycosylation. Its function is as follows. Catalyzes the initial reaction in O-linked oligosaccharide biosynthesis, the transfer of an N-acetyl-D-galactosamine residue to a serine or threonine residue on the protein receptor. It can both act as a peptide transferase that transfers GalNAc onto unmodified peptide substrates, and as a glycopeptide transferase that requires the prior addition of a GalNAc on a peptide before adding additional GalNAc moieties. In terms of biological role, N-acetylgalactosaminyltransferase which preferentially O-glycosylates negatively charge substrates. O-glycosylates mucin-like protein Sgs3 in the salivary gland but to a lesser extent than isoform B. By regulating the O-glycosylation of secretory cargo proteins plays a role in the morphology and maturation of salivary gland secretory granules. N-acetylgalactosaminyltransferase which preferentially O-glycosylates positively charge substrates. O-glycosylates mucin-like protein Sgs3 in the salivary gland. By regulating the O-glycosylation of secretory cargo proteins, plays a role in the morphology and maturation of salivary gland secretory granules. The protein is Putative polypeptide N-acetylgalactosaminyltransferase 9 of Drosophila melanogaster (Fruit fly).